Consider the following 53-residue polypeptide: Sec-independent protein translocase protein TatA (53 aa).

Residues 1 to 21 (MGMSVSHLLIVLLIIFVLFGA) form a helical membrane-spanning segment.

The protein belongs to the TatA/E family. As to quaternary structure, the Tat system comprises two distinct complexes: a TatABC complex, containing multiple copies of TatA, TatB and TatC subunits, and a separate TatA complex, containing only TatA subunits. Substrates initially bind to the TatABC complex, which probably triggers association of the separate TatA complex to form the active translocon.

The protein localises to the cell inner membrane. Its function is as follows. Part of the twin-arginine translocation (Tat) system that transports large folded proteins containing a characteristic twin-arginine motif in their signal peptide across membranes. TatA could form the protein-conducting channel of the Tat system. This chain is Sec-independent protein translocase protein TatA, found in Rickettsia massiliae (strain Mtu5).